Here is a 288-residue protein sequence, read N- to C-terminus: Pyridoxal kinase PdxY (288 aa).

Residues Ser-12 and 47-48 (TQ) each bind substrate. ATP is bound by residues Asp-114, Glu-151, Lys-184, and 211-214 (RPLL). Position 225 (Asp-225) interacts with substrate.

Belongs to the pyridoxine kinase family. PdxY subfamily. Homodimer. It depends on Mg(2+) as a cofactor.

It catalyses the reaction pyridoxal + ATP = pyridoxal 5'-phosphate + ADP + H(+). It participates in cofactor metabolism; pyridoxal 5'-phosphate salvage; pyridoxal 5'-phosphate from pyridoxal: step 1/1. Functionally, pyridoxal kinase involved in the salvage pathway of pyridoxal 5'-phosphate (PLP). Catalyzes the phosphorylation of pyridoxal to PLP. This is Pyridoxal kinase PdxY from Pseudomonas paraeruginosa (strain DSM 24068 / PA7) (Pseudomonas aeruginosa (strain PA7)).